The sequence spans 874 residues: Collagen alpha-2(I) chain (874 aa).

Residues 1–874 (SGGFDFSFLP…FGYEGDFYRA (874 aa)) are disordered. 4-hydroxyproline occurs at positions 10 and 13. Lys16 carries the allysine modification. Positions 27–66 (LMGPRGPPGASGAPGPQGFQGPAGEPGEPGQTGPAGARGP) are enriched in low complexity. 4-hydroxyproline is present on residues Pro34 and Pro40. 5-hydroxylysine; alternate is present on Lys93. O-linked (Gal...) hydroxylysine; alternate glycosylation occurs at Lys93. Low complexity-rich tracts occupy residues 110–143 (ARGR…SAGP), 188–209 (PGAN…AGAP), and 218–236 (PGPV…AGSK). The span at 237–246 (GESGGKGEPG) shows a compositional bias: gly residues. Positions 247–257 (SAGPQGPPGSS) are enriched in low complexity. A 4-hydroxyproline mark is found at Pro317 and Pro320. 3 stretches are compositionally biased toward low complexity: residues 346–365 (LPGI…RGEA), 434–451 (PGES…SRGP), and 463–473 (EPGVVGAPGTA). The segment covering 474-483 (GPAGSGGLPG) has biased composition (gly residues). Low complexity-rich tracts occupy residues 491–538 (RGEV…PRGS) and 545–565 (VGPA…QPGA). The span at 566–575 (KGERGTKGPK) shows a compositional bias: basic and acidic residues. Residues 583–593 (PTGPVGSAGPA) show a composition bias toward low complexity. Positions 603–612 (GSRGDGGPPG) are enriched in gly residues. Positions 614 to 623 (TGFPGAAGRT) are enriched in low complexity. The segment covering 648–662 (GPVGRGETGAGGPPG) has biased composition (gly residues). Composition is skewed to low complexity over residues 663–697 (FTGE…LGLP) and 705–724 (LPGV…AGPP). Gly residues predominate over residues 725 to 744 (GARGDGNPGSDGPPGRGAAG). 2 stretches are compositionally biased toward low complexity: residues 745 to 755 (APGPHGTVGPA) and 763 to 778 (EPGP…ALGP).

It belongs to the fibrillar collagen family. In terms of assembly, trimers of one alpha 2(I) and two alpha 1(I) chains. Interacts (via C-terminus) with TMEM131 (via PapD-L domain); the interaction is direct and is involved in assembly and TRAPPIII ER-to-Golgi transport complex-dependent secretion of collagen. Post-translationally, prolines at the third position of the tripeptide repeating unit (G-X-Y) are hydroxylated in some or all of the chains. As to expression, expressed in bones.

It is found in the secreted. It localises to the extracellular space. The protein localises to the extracellular matrix. Functionally, type I collagen is a member of group I collagen (fibrillar forming collagen). The chain is Collagen alpha-2(I) chain from Megalonyx jeffersonii (Jefferson's ground sloth).